A 543-amino-acid polypeptide reads, in one-letter code: Probable protein kinase UbiB (543 aa).

The Protein kinase domain maps to 123-500; sequence DFDQQPLASA…HRRHAQARFL (378 aa). Residues 129–137 and Lys152 contribute to the ATP site; that span reads LASASVAQV. Catalysis depends on Asp286, which acts as the Proton acceptor. The next 2 membrane-spanning stretches (helical) occupy residues 499 to 519 and 521 to 541; these read FLLG…PTHE and LASA…WKIS.

This sequence belongs to the ABC1 family. UbiB subfamily.

It is found in the cell inner membrane. It functions in the pathway cofactor biosynthesis; ubiquinone biosynthesis [regulation]. In terms of biological role, is probably a protein kinase regulator of UbiI activity which is involved in aerobic coenzyme Q (ubiquinone) biosynthesis. The sequence is that of Probable protein kinase UbiB from Tolumonas auensis (strain DSM 9187 / NBRC 110442 / TA 4).